A 328-amino-acid chain; its full sequence is Cytochrome c biogenesis protein CcsA (328 aa).

8 consecutive transmembrane segments (helical) span residues 13 to 33 (ISFS…LVNL), 46 to 66 (GIII…IYSG), 73 to 93 (LYES…VSYF), 101 to 121 (LNAI…SGLL), 146 to 166 (MILG…LLVI), 234 to 254 (IISL…VWAN), 263 to 283 (WDPK…YLHI), and 295 to 315 (AIVA…VILL).

The protein belongs to the CcmF/CycK/Ccl1/NrfE/CcsA family. May interact with Ccs1.

It is found in the plastid. The protein localises to the chloroplast thylakoid membrane. Functionally, required during biogenesis of c-type cytochromes (cytochrome c6 and cytochrome f) at the step of heme attachment. This Crucihimalaya wallichii (Rock-cress) protein is Cytochrome c biogenesis protein CcsA.